The sequence spans 662 residues: Portal protein (662 aa).

The protein belongs to the herpesviridae portal protein family. In terms of assembly, homododecamerizes. Interacts with terminase subunits TRM1 and TRM3.

Its subcellular location is the virion. The protein localises to the host nucleus. Forms a portal in the viral capsid through which viral DNA is translocated during DNA packaging. Assembles as a dodecamer at a single fivefold axe of the T=16 icosahedric capsid. Binds to the molecular motor that translocates the viral DNA, termed terminase. This is Portal protein (U76) from Human herpesvirus 6A (strain Uganda-1102) (HHV-6 variant A).